The sequence spans 152 residues: Transcriptional regulator MraZ (152 aa).

SpoVT-AbrB domains are found at residues 5-52 and 81-124; these read ATLV…PLPE and ASEC…DETT.

The protein belongs to the MraZ family. Forms oligomers.

It localises to the cytoplasm. Its subcellular location is the nucleoid. In terms of biological role, negatively regulates its own expression and that of the subsequent genes in the proximal part of the division and cell wall (dcw) gene cluster. Acts by binding directly to DNA. May also regulate the expression of genes outside the dcw cluster. The sequence is that of Transcriptional regulator MraZ from Citrobacter koseri (strain ATCC BAA-895 / CDC 4225-83 / SGSC4696).